Here is a 352-residue protein sequence, read N- to C-terminus: 4-hydroxy-2-oxovalerate aldolase (352 aa).

Residues 13 to 265 (VRLTDTSLRD…KTGIDFFDIA (253 aa)) enclose the Pyruvate carboxyltransferase domain. Residue 21–22 (RD) coordinates substrate. Asp22 lines the Mn(2+) pocket. His25 functions as the Proton acceptor in the catalytic mechanism. Substrate-binding residues include Ser175 and His204. His204 and His206 together coordinate Mn(2+). Residue Tyr295 coordinates substrate.

The protein belongs to the 4-hydroxy-2-oxovalerate aldolase family.

It carries out the reaction (S)-4-hydroxy-2-oxopentanoate = acetaldehyde + pyruvate. The sequence is that of 4-hydroxy-2-oxovalerate aldolase from Mycolicibacterium paratuberculosis (strain ATCC BAA-968 / K-10) (Mycobacterium paratuberculosis).